The primary structure comprises 62 residues: Arabinogalactan protein 40 (62 aa).

An N-terminal signal peptide occupies residues 1 to 22 (MEMKNIFVALFISAVLVSSVSA). 3 positions are modified to 4-hydroxyproline: Pro-28, Pro-30, and Pro-32. Pro-28, Pro-30, and Pro-32 each carry an O-linked (Ara...) hydroxyproline glycan. The GPI-anchor amidated serine moiety is linked to residue Ser-35. Positions 36–62 (SASTVAFPVVGSIVAASLSAFLALLLQ) are cleaved as a propeptide — removed in mature form.

Belongs to the AG-peptide AGP family. Post-translationally, contains 4-hydroxyproline; hydroxylated on Pro-28, Pro-30 and Pro-32. O-glycosylated on hydroxyprolines; noncontiguous hydroxylproline residues are glycosylated with arabinogalactan.

It localises to the cell membrane. Its function is as follows. Proteoglycan that seems to be implicated in diverse developmental roles such as differentiation, cell-cell recognition, embryogenesis and programmed cell death. The polypeptide is Arabinogalactan protein 40 (Arabidopsis thaliana (Mouse-ear cress)).